Consider the following 214-residue polypeptide: Uracil phosphoribosyltransferase (214 aa).

Residues arginine 81, arginine 106, and aspartate 133 to serine 141 each bind 5-phospho-alpha-D-ribose 1-diphosphate. Uracil contacts are provided by residues isoleucine 196 and glycine 201–alanine 203. Position 202 (aspartate 202) interacts with 5-phospho-alpha-D-ribose 1-diphosphate.

This sequence belongs to the UPRTase family. Requires Mg(2+) as cofactor.

It carries out the reaction UMP + diphosphate = 5-phospho-alpha-D-ribose 1-diphosphate + uracil. Its pathway is pyrimidine metabolism; UMP biosynthesis via salvage pathway; UMP from uracil: step 1/1. With respect to regulation, allosterically activated by GTP. Functionally, catalyzes the conversion of uracil and 5-phospho-alpha-D-ribose 1-diphosphate (PRPP) to UMP and diphosphate. This Legionella pneumophila (strain Paris) protein is Uracil phosphoribosyltransferase.